Consider the following 255-residue polypeptide: 5-oxoprolinase subunit A (255 aa).

Belongs to the LamB/PxpA family. As to quaternary structure, forms a complex composed of PxpA, PxpB and PxpC.

It catalyses the reaction 5-oxo-L-proline + ATP + 2 H2O = L-glutamate + ADP + phosphate + H(+). Catalyzes the cleavage of 5-oxoproline to form L-glutamate coupled to the hydrolysis of ATP to ADP and inorganic phosphate. In Campylobacter jejuni subsp. jejuni serotype O:2 (strain ATCC 700819 / NCTC 11168), this protein is 5-oxoprolinase subunit A.